The sequence spans 601 residues: Glutathione-regulated potassium-efflux system protein KefB (601 aa).

The next 13 membrane-spanning stretches (helical) occupy residues 4-24, 29-49, 55-75, 87-107, 111-131, 152-172, 177-197, 207-227, 230-250, 262-282, 284-304, 324-344, and 356-376; these read ADLL…VPLA, IGAV…GLGF, EILH…GLEL, IFGV…GLLM, FLWQ…TAMA, VLLF…LLAG, HFDW…LIGG, FIAA…LVLS, LFMD…GVLL, AIDP…GMSL, LGVL…LVAI, MQFA…FSTA, and ALLL…MKGI. The RCK N-terminal domain occupies 400 to 519; the sequence is KPQVIVVGFG…AGVTQFSRET (120 aa).

This sequence belongs to the monovalent cation:proton antiporter 2 (CPA2) transporter (TC 2.A.37) family. KefB subfamily. As to quaternary structure, interacts with the regulatory subunit KefG.

The protein localises to the cell inner membrane. Functionally, pore-forming subunit of a potassium efflux system that confers protection against electrophiles. Catalyzes K(+)/H(+) antiport. The chain is Glutathione-regulated potassium-efflux system protein KefB from Salmonella schwarzengrund (strain CVM19633).